The following is a 217-amino-acid chain: Uridylate kinase (217 aa).

Residue 6-10 (KLSGR) coordinates ATP. Gly38 lines the UMP pocket. Residues Gly39 and Arg43 each coordinate ATP. Residues Asp60 and 107 to 113 (FQPGQST) contribute to the UMP site. Positions 134, 139, and 142 each coordinate ATP.

It belongs to the UMP kinase family. Homohexamer.

The protein resides in the cytoplasm. The catalysed reaction is UMP + ATP = UDP + ADP. It participates in pyrimidine metabolism; CTP biosynthesis via de novo pathway; UDP from UMP (UMPK route): step 1/1. With respect to regulation, inhibited by UTP. Its function is as follows. Catalyzes the reversible phosphorylation of UMP to UDP. This is Uridylate kinase from Pyrobaculum islandicum (strain DSM 4184 / JCM 9189 / GEO3).